The sequence spans 135 residues: Crossover junction endodeoxyribonuclease Hje (135 aa).

3 residues coordinate Mg(2+): Glu10, Asp39, and Glu52.

The protein belongs to the Holliday junction resolvase Hjc family. Hje subfamily. In terms of assembly, homodimer. Requires Mg(2+) as cofactor.

The enzyme catalyses Endonucleolytic cleavage at a junction such as a reciprocal single-stranded crossover between two homologous DNA duplexes (Holliday junction).. A structure-specific endonuclease that resolves Holliday junction (HJ) intermediates during genetic recombination. Acts only on 4-way DNA junctions in a sequence non-specific manner; introduces paired nicks in opposing strands 2 bases 3' of the point of strand exchange only on continuous strands of 4-way junction DNA. Cleaves both mobile and immobile junctions. Plays a more direct role in DNA repair than Hjc. Overexpression of this protein decreases the growth rate, and leads to genomic instability, and global transcriptomic changes. The sequence is that of Crossover junction endodeoxyribonuclease Hje from Saccharolobus islandicus (strain REY15A) (Sulfolobus islandicus).